Reading from the N-terminus, the 372-residue chain is Saccharopine dehydrogenase [NAD(+), L-lysine-forming] (372 aa).

L-saccharopine contacts are provided by arginine 18 and lysine 77. Residue lysine 77 is the Proton acceptor of the active site. Histidine 95 serves as the catalytic Proton donor. Glutamine 100 is a binding site for L-saccharopine. Position 129 (arginine 129) interacts with NAD(+). L-saccharopine contacts are provided by arginine 130 and phenylalanine 134. NAD(+) contacts are provided by residues 200–201, aspartate 224, threonine 228, tyrosine 248, and valine 275; that span reads GR. An intrachain disulfide couples cysteine 202 to cysteine 246. L-saccharopine is bound at residue 276–278; sequence SAD. 316-319 provides a ligand contact to NAD(+); the sequence is IDHL.

It belongs to the AlaDH/PNT family. In terms of assembly, monomer.

It catalyses the reaction L-saccharopine + NAD(+) + H2O = L-lysine + 2-oxoglutarate + NADH + H(+). The protein operates within amino-acid biosynthesis; L-lysine biosynthesis via AAA pathway; L-lysine from L-alpha-aminoadipate (fungal route): step 3/3. Functionally, catalyzes the NAD(+)-dependent cleavage of saccharopine to L-lysine and 2-oxoglutarate, the final step in the alpha-aminoadipate (AAA) pathway for lysin biosynthesis. This Neurospora crassa (strain ATCC 24698 / 74-OR23-1A / CBS 708.71 / DSM 1257 / FGSC 987) protein is Saccharopine dehydrogenase [NAD(+), L-lysine-forming] (lys-4).